We begin with the raw amino-acid sequence, 825 residues long: Endoglucanase C (825 aa).

The first 28 residues, 1–28 (MRNKLRRLLAIMMAVLLITSLFAPMVSA), serve as a signal peptide directing secretion. Glu-219 acts as the Proton donor in catalysis. Glu-335 acts as the Nucleophile in catalysis. The segment covering 607-621 (DRESVPEPVEHDTKG) has biased composition (basic and acidic residues). The interval 607-635 (DRESVPEPVEHDTKGDSALPSDFEDGTRQ) is disordered.

The protein belongs to the glycosyl hydrolase 5 (cellulase A) family.

The catalysed reaction is Endohydrolysis of (1-&gt;4)-beta-D-glucosidic linkages in cellulose, lichenin and cereal beta-D-glucans.. The protein is Endoglucanase C (celC) of Evansella cellulosilytica (strain ATCC 21833 / DSM 2522 / FERM P-1141 / JCM 9156 / N-4) (Bacillus cellulosilyticus).